The primary structure comprises 778 residues: Tubulin polyglutamylase ttll6 (778 aa).

Residues 1-43 are disordered; it reads MGTPAERSVSEVCRCEPDPGLEGEGWGSDTHAEPSNTPIPLPV. Positions 51–393 constitute a TTL domain; the sequence is KKKLWINLTN…LGACDRRKIT (343 aa). ATP-binding positions include Lys168, 174 to 175, 196 to 199, and 209 to 211; these read QG, QVYM, and KFD. Gln174 contributes to the a protein binding site. L-glutamate is bound at residue Arg235. An ATP-binding site is contributed by 257–258; it reads TN. Tyr259 and Lys277 together coordinate L-glutamate. Mg(2+) is bound by residues Asp340, Glu353, and Asn355. Residue His356 coordinates a protein. Positions 365 to 445 are c-MTBD region; it reads RLDREVKDSL…MGGFRRIFPR (81 aa). Lys371 contacts L-glutamate. Composition is skewed to basic and acidic residues over residues 402-418, 485-510, 533-542, and 760-778; these read ERLQQNRSREARNEEPR, KQEQKERDKKGSRKQDLQGESAGEKV, SVREETPVSL, and LSHDLRKAPRRVLPHEHSL. Disordered regions lie at residues 402-422, 485-542, and 758-778; these read ERLQQNRSREARNEEPRQSQA, KQEQ…PVSL, and PHLSHDLRKAPRRVLPHEHSL.

Belongs to the tubulin--tyrosine ligase family. It depends on Mg(2+) as a cofactor.

The protein localises to the cytoplasm. The protein resides in the cytoskeleton. Its subcellular location is the cilium axoneme. It is found in the cilium basal body. The catalysed reaction is L-glutamyl-[protein] + L-glutamate + ATP = gamma-L-glutamyl-L-glutamyl-[protein] + ADP + phosphate + H(+). The enzyme catalyses (L-glutamyl)(n)-gamma-L-glutamyl-L-glutamyl-[protein] + L-glutamate + ATP = (L-glutamyl)(n+1)-gamma-L-glutamyl-L-glutamyl-[protein] + ADP + phosphate + H(+). Polyglutamylase which modifies both tubulin and non-tubulin proteins, generating alpha-linked polyglutamate side chains on the gamma-carboxyl group of specific glutamate residues of target proteins. Preferentially mediates ATP-dependent long polyglutamate chain elongation over the initiation step of the polyglutamylation reaction. Preferentially modifies the alpha-tubulin tail over a beta-tail. Mediates microtubule polyglutamylation in cilia axoneme, which is important for ciliary structural formation and motility. Polyglutamylates olfactory cilia, necessary for the regulation of ciliary structure and beating. The polypeptide is Tubulin polyglutamylase ttll6 (Danio rerio (Zebrafish)).